Reading from the N-terminus, the 386-residue chain is MLSGQAAIVGIGATDFSKNSGRSELRLAAEAVLDALADAGLSPTDVDGLTTFTMDTNTEIAVARAAGIGELTFFSKIHYGGGAACATVQHAAMAVATGVADVVVAYRAFNERSGMRFGQVQTRLTENADSTGVDNSFSYPHGLSTPAAQVAMIARRYMHLSGATSRDFGAVSVADRKHAANNPKAYFYGKPITIEDHQNSRWIAEPLRLLDCCQETDGAVAIVVTSAARARDLKQRPVVIEAAAQGCSPDQYTMVSYYRPELDGLPEMGLVGRQLWAQSGLTPADVQTAVLYDHFTPFTLIQLEELGFCGKGEAKDFIADGAIEVGGRLPINTHGGQLGEAYIHGMNGIAEGVRQLRGTSVNPVAGVEHVLVTAGTGVPTSGLILG.

Tyr292 functions as the Proton acceptor in the catalytic mechanism. Tyr342 functions as the Proton donor in the catalytic mechanism.

This sequence belongs to the thiolase-like superfamily. Homodimer. Interacts with the ChsH1/ChsH2 hydratase via the DUF35 C-terminal region of ChsH2 (ChsH2-DUF35). The ChsH1-ChsH2-Ltp2 protein complex is composed of two protomers that form a heterohexameric structure through the Ltp2 dimerization interface.

The enzyme catalyses 17-hydroxy-3-oxochol-4-en-22-oyl-CoA = androst-4-ene-3,17-dione + propanoyl-CoA. It functions in the pathway steroid metabolism; cholesterol degradation. In terms of biological role, involved in cholesterol side chain degradation. When associated with the ChsH1/ChsH2 hydratase, catalyzes the retroaldol cleavage of 17-hydroxy-3-oxo-4-pregnene-20-carboxyl-CoA (17-HOPC-CoA) produced by the hydratase, forming androst-4-ene-3,17-dione and propionyl-CoA. This is 17-hydroxy-3-oxo-4-pregnene-20-carboxyl-CoA lyase from Mycobacterium tuberculosis (strain ATCC 25618 / H37Rv).